Here is a 165-residue protein sequence, read N- to C-terminus: C-phycoerythrin class 2 subunit alpha (165 aa).

Cysteine 75 is a binding site for phycourobilin. Positions 83 and 140 each coordinate (2R,3E)-phycoerythrobilin.

The protein belongs to the phycobiliprotein family. In terms of assembly, heterodimer of an alpha and a beta chain. In terms of processing, contains two covalently linked phycoerythrobilin chromophores and one covalently linked phycourobilin chromophore.

The protein localises to the cellular thylakoid membrane. Light-harvesting photosynthetic bile pigment-protein from the phycobiliprotein complex. This chain is C-phycoerythrin class 2 subunit alpha (mpeA), found in Synechococcus sp. (strain WH8020).